The following is a 392-amino-acid chain: Peptidoglycan hydrolase PcsB (392 aa).

Positions 1–27 are cleaved as a signal peptide; the sequence is MKKKILASLLLSTVMVSQVAVLTTAHA. Coiled coils occupy residues 34 to 96 and 191 to 227; these read IAAQ…LSKN and TKQA…AEAE. An interacts with large extracellular loop of FtsX region spans residues 47-267; it reads QQQEAQKQVD…TAQVQAVSES (221 aa). Positions 267–390 constitute a Peptidase C51 domain; it reads SAAAPVRAKV…TSEGFVTYIY (124 aa).

Homodimer. Interacts (via N-terminal coiled coil domain) with FtsX (via large extracellular loop). This interaction directs PcsB to equatorial and septal sites of dividing cells. Interacts with FtsE.

It localises to the cell membrane. The protein resides in the cell septum. It is found in the secreted. With respect to regulation, lacks peptidoglycan-hydrolase activity in vitro, probably due to auto-inhibition by the CC domain. In the homodimer, interaction between the CC domain in one monomer and the hydrolase active site in the peptidase C51/CHAP domain in the other monomer probably mediates auto-inhibition of the hydrolase activity. In terms of biological role, peptidoglycan-hydrolase activity. Required in maintaining normal growth and cellular morphology. Involved in splitting of the septum during cell division. The polypeptide is Peptidoglycan hydrolase PcsB (Streptococcus pneumoniae serotype 2 (strain D39 / NCTC 7466)).